The primary structure comprises 843 residues: N-acetyltransferase ESCO1 (843 aa).

The interval Met-1 to Ala-78 is disordered. Residues Ser-18 to Glu-28 show a composition bias toward acidic residues. The span at Ser-66–Ala-78 shows a compositional bias: polar residues. Residue Ser-202 is modified to Phosphoserine. The disordered stretch occupies residues Asn-262–Lys-300. The span at His-269–Arg-278 shows a compositional bias: polar residues. Lys-335 participates in a covalent cross-link: Glycyl lysine isopeptide (Lys-Gly) (interchain with G-Cter in SUMO2). Residue Ser-415 is modified to Phosphoserine. Residues Asp-546 to Asp-584 form a disordered region. Residues Ser-566–Asp-584 show a composition bias toward basic and acidic residues. A CCHH-type zinc finger spans residues Val-620 to His-644. Residues Ile-775–Val-777, Arg-783–Ser-788, and Thr-815–Asp-817 contribute to the acetyl-CoA site.

This sequence belongs to the acetyltransferase family. ECO subfamily. In terms of assembly, the subunit structure is controversial. Monomer. Homodimer. Post-translationally, phosphorylated during mitosis.

The protein resides in the nucleus. It is found in the chromosome. The enzyme catalyses L-lysyl-[protein] + acetyl-CoA = N(6)-acetyl-L-lysyl-[protein] + CoA + H(+). In terms of biological role, acetyltransferase required for the establishment of sister chromatid cohesion. Couples the processes of cohesion and DNA replication to ensure that only sister chromatids become paired together. In contrast to the structural cohesins, the deposition and establishment factors are required only during S phase. Acts by mediating the acetylation of cohesin component SMC3. The chain is N-acetyltransferase ESCO1 (Esco1) from Mus musculus (Mouse).